Consider the following 418-residue polypeptide: Tyrosine--tRNA ligase (418 aa).

Residue tyrosine 35 coordinates L-tyrosine. The 'HIGH' region motif lies at 40 to 49; it reads PTAKSLHIGH. The L-tyrosine site is built by tyrosine 168 and glutamine 172. The short motif at 228–232 is the 'KMSKS' region element; the sequence is KYGKT. Lysine 231 provides a ligand contact to ATP. Positions 352–410 constitute an S4 RNA-binding domain; sequence PTVVGAMVAAGVVDTKSGGRRAVAEGGAYLNNVKVADPDQRLTDDDFLCGRVALVRRGK.

It belongs to the class-I aminoacyl-tRNA synthetase family. TyrS type 1 subfamily. In terms of assembly, homodimer.

The protein resides in the cytoplasm. It carries out the reaction tRNA(Tyr) + L-tyrosine + ATP = L-tyrosyl-tRNA(Tyr) + AMP + diphosphate + H(+). Catalyzes the attachment of tyrosine to tRNA(Tyr) in a two-step reaction: tyrosine is first activated by ATP to form Tyr-AMP and then transferred to the acceptor end of tRNA(Tyr). This is Tyrosine--tRNA ligase from Cutibacterium acnes (strain DSM 16379 / KPA171202) (Propionibacterium acnes).